Here is a 262-residue protein sequence, read N- to C-terminus: Lysosomal-associated transmembrane protein 5 (262 aa).

The next 5 helical transmembrane spans lie at isoleucine 19 to histidine 39, isoleucine 64 to valine 84, leucine 92 to glycine 112, phenylalanine 134 to serine 154, and phenylalanine 184 to tyrosine 204. Residue tyrosine 259 is modified to Phosphotyrosine.

It belongs to the LAPTM4/LAPTM5 transporter family. Binds to ubiquitin. As to expression, preferentially expressed in adult hematopoietic tissues. High levels in lymphoid and myeloid tissues. Highly expressed in peripheral blood leukocytes, thymus, spleen and lung, followed by placenta, liver and kidney.

It is found in the lysosome membrane. Its function is as follows. May have a special functional role during embryogenesis and in adult hematopoietic cells. The protein is Lysosomal-associated transmembrane protein 5 (LAPTM5) of Homo sapiens (Human).